Here is a 62-residue protein sequence, read N- to C-terminus: Small polypeptide DEVIL 17 (62 aa).

Positions 27-58 are required for DVL/RTFL small polypeptide activity; it reads RRNKGCLAMVKERRSRFYIARRCILMLLCWHK. The chain crosses the membrane as a helical span at residues 39–56; the sequence is RRSRFYIARRCILMLLCW.

It belongs to the DVL/RTFL small polypeptides family.

The protein localises to the cell membrane. Its function is as follows. Small polypeptide acting as a regulatory molecule which coordinates cellular responses required for differentiation, growth and development, probably by restricting polar cell proliferation in lateral organs and coordinating socket cell recruitment and differentiation at trichome sites. The chain is Small polypeptide DEVIL 17 from Arabidopsis thaliana (Mouse-ear cress).